The primary structure comprises 378 residues: MIRGNDPILLTPGPLTTSLATKQAMLRDWGSWDAAFNAITGSLCEDLVRIVHGEGTHVCVPMQGSGTFSVEAAIANVVPRDGKVLVPQNGAYCQRILKICKVLGRAHVELPIPEDRPATAAAIEAALKKDPSITHVAQVHCETGAGVLNPLPEIAAVCARLGKGLIVDAMSSFGAIEIDARTMPFDALVAATGKCIEGVPGMGFVLVKKTVLEGSQGNSHSLALDLYDQYTYMQKTTQWRFTPPTHVVAAFRTALDQFLEEGGQPVRGERYRRNYETLVQGMAVLGFRPFLSPDVQAPIIVTFHAPADARYDFRTFYEKVRSRGYILYPGKLTQVETFRVGCIGAIDDNEMRNVVSAIGETLREMGISMQPEGRVRAA.

K194 carries the N6-(pyridoxal phosphate)lysine modification.

This sequence belongs to the class-V pyridoxal-phosphate-dependent aminotransferase family. PhnW subfamily. Homodimer. The cofactor is pyridoxal 5'-phosphate.

The enzyme catalyses (2-aminoethyl)phosphonate + pyruvate = phosphonoacetaldehyde + L-alanine. In terms of biological role, involved in phosphonate degradation. This Cupriavidus pinatubonensis (strain JMP 134 / LMG 1197) (Cupriavidus necator (strain JMP 134)) protein is 2-aminoethylphosphonate--pyruvate transaminase 1.